A 349-amino-acid polypeptide reads, in one-letter code: Protein Wnt-7b (349 aa).

Positions 1–24 (MHRNFRKWIFYVFLCFGVLYVKLG) are cleaved as a signal peptide. 5 cysteine pairs are disulfide-bonded: Cys-73/Cys-84, Cys-123/Cys-131, Cys-133/Cys-152, Cys-200/Cys-214, and Cys-202/Cys-209. N-linked (GlcNAc...) asparagine glycosylation is found at Asn-83 and Asn-127. Ser-206 carries the O-palmitoleoyl serine; by PORCN lipid modification. The disordered linker stretch occupies residues 238–266 (VEVVRASRLRQPTFLRIKQLRSYQKPMET). Disulfide bonds link Cys-278/Cys-309, Cys-294/Cys-304, Cys-308/Cys-348, Cys-324/Cys-339, Cys-326/Cys-336, and Cys-331/Cys-332. A glycan (N-linked (GlcNAc...) asparagine) is linked at Asn-295.

The protein belongs to the Wnt family. In terms of assembly, forms a soluble 1:1 complex with AFM; this prevents oligomerization and is required for prolonged biological activity. The complex with AFM may represent the physiological form in body fluids. Interacts with FZD1 and FZD10. Interacts with FZD4 (in vitro). Interacts with PORCN. Interacts with glypican GPC3. Interacts (via intrinsically disordered linker region) with RECK; interaction with RECK confers ligand selectivity for Wnt7 in brain endothelial cells and allows these cells to selectively respond to Wnt7. Palmitoleoylation is required for efficient binding to frizzled receptors. Depalmitoleoylation leads to Wnt signaling pathway inhibition.

The protein resides in the secreted. It localises to the extracellular space. It is found in the extracellular matrix. Ligand for members of the frizzled family of seven transmembrane receptors that functions in the canonical Wnt/beta-catenin signaling pathway. Required for normal fusion of the chorion and the allantois during placenta development. Required for central nervous system (CNS) angiogenesis and blood-brain barrier regulation. This is Protein Wnt-7b (Wnt7b) from Mus musculus (Mouse).